Consider the following 246-residue polypeptide: Uridylate kinase (246 aa).

20 to 23 (KISG) is a binding site for ATP. Residues 28 to 33 (GDQGYG) form an involved in allosteric activation by GTP region. Gly62 contacts UMP. ATP is bound by residues Gly63 and Arg67. UMP-binding positions include Asp82 and 143 to 150 (TGNPYFTT). 3 residues coordinate ATP: Thr170, Tyr176, and Asp179.

The protein belongs to the UMP kinase family. As to quaternary structure, homohexamer.

Its subcellular location is the cytoplasm. The enzyme catalyses UMP + ATP = UDP + ADP. Its pathway is pyrimidine metabolism; CTP biosynthesis via de novo pathway; UDP from UMP (UMPK route): step 1/1. With respect to regulation, allosterically activated by GTP. Inhibited by UTP. Functionally, catalyzes the reversible phosphorylation of UMP to UDP. In Cereibacter sphaeroides (strain ATCC 17025 / ATH 2.4.3) (Rhodobacter sphaeroides), this protein is Uridylate kinase.